Reading from the N-terminus, the 72-residue chain is DNA-directed RNA polymerase subunit omega (72 aa).

It belongs to the RNA polymerase subunit omega family. As to quaternary structure, the RNAP catalytic core consists of 2 alpha, 1 beta, 1 beta' and 1 omega subunit. When a sigma factor is associated with the core the holoenzyme is formed, which can initiate transcription.

It carries out the reaction RNA(n) + a ribonucleoside 5'-triphosphate = RNA(n+1) + diphosphate. Promotes RNA polymerase assembly. Latches the N- and C-terminal regions of the beta' subunit thereby facilitating its interaction with the beta and alpha subunits. The polypeptide is DNA-directed RNA polymerase subunit omega (Francisella tularensis subsp. tularensis (strain FSC 198)).